Here is a 163-residue protein sequence, read N- to C-terminus: Phosphopantetheine adenylyltransferase (163 aa).

Residue Ser-11 participates in substrate binding. ATP contacts are provided by residues Ser-11–Phe-12 and His-19. Positions 43, 76, and 90 each coordinate substrate. Residues Gly-91–Arg-93, Glu-101, and Trp-126–Ser-132 contribute to the ATP site.

Belongs to the bacterial CoaD family. As to quaternary structure, homohexamer. The cofactor is Mg(2+).

The protein resides in the cytoplasm. The enzyme catalyses (R)-4'-phosphopantetheine + ATP + H(+) = 3'-dephospho-CoA + diphosphate. It functions in the pathway cofactor biosynthesis; coenzyme A biosynthesis; CoA from (R)-pantothenate: step 4/5. Its function is as follows. Reversibly transfers an adenylyl group from ATP to 4'-phosphopantetheine, yielding dephospho-CoA (dPCoA) and pyrophosphate. In Streptococcus pyogenes serotype M2 (strain MGAS10270), this protein is Phosphopantetheine adenylyltransferase.